A 601-amino-acid polypeptide reads, in one-letter code: Protein nubbin (601 aa).

Residues 1 to 25 (MVMSELRWHTASPEDNKNSLKRDLL) are compositionally biased toward basic and acidic residues. Disordered stretches follow at residues 1–32 (MVMSELRWHTASPEDNKNSLKRDLLKSTPTSA), 49–94 (SRSP…AKRQ), 121–158 (KQEEDYDDANGGALNLTSDNSRHSTQSPSNSVKSATAS), 351–425 (PASS…ETTD), and 581–601 (INPSLDSPTGADDDESSYMMH). Low complexity predominate over residues 49 to 68 (SRSPSPLQSNASDCDDNNSS). Residues 135 to 157 (NLTSDNSRHSTQSPSNSVKSATA) are compositionally biased toward polar residues. Over residues 384-415 (TPSTPTSGTQMSQGTTTPQPKTVASAAAARAA) the composition is skewed to low complexity. The region spanning 421–495 (EETTDLEELE…LLQKWLDDAD (75 aa)) is the POU-specific domain. A DNA-binding region (homeobox) is located at residues 523-582 (RRKKRTSIETTIRGALEKAFLANQKPTSEEITQLADRLSMEKEVVRVWFCNRRQKEKRIN). Over residues 591-601 (ADDDESSYMMH) the composition is skewed to acidic residues.

Belongs to the POU transcription factor family. Class-2 subfamily. As to expression, initial expression in cellular blastoderm stage, then in ectodermal stripes during germband extension. Broad expression in the neuroectoderm followed by limitation to discrete subsets of CNS cells, and expression in specific PNS neurons and support cells.

It localises to the nucleus. Its function is as follows. DNA-binding regulatory protein implicated in early development. Involved in neuronal cell fate decision. Repressed directly or indirectly by the BX-C homeotic proteins. In Drosophila melanogaster (Fruit fly), this protein is Protein nubbin (nub).